Here is a 688-residue protein sequence, read N- to C-terminus: Elongation factor G (688 aa).

A tr-type G domain is found at 8 to 282 (EKTRNIGIMA…AIIDYLPSPM (275 aa)). Residues 17–24 (AHIDAGKT), 81–85 (DTPGH), and 135–138 (NKMD) each bind GTP.

The protein belongs to the TRAFAC class translation factor GTPase superfamily. Classic translation factor GTPase family. EF-G/EF-2 subfamily.

Its subcellular location is the cytoplasm. Its function is as follows. Catalyzes the GTP-dependent ribosomal translocation step during translation elongation. During this step, the ribosome changes from the pre-translocational (PRE) to the post-translocational (POST) state as the newly formed A-site-bound peptidyl-tRNA and P-site-bound deacylated tRNA move to the P and E sites, respectively. Catalyzes the coordinated movement of the two tRNA molecules, the mRNA and conformational changes in the ribosome. The protein is Elongation factor G of Phytoplasma mali (strain AT).